The following is a 224-amino-acid chain: PKHD-type hydroxylase CYB_2270 (224 aa).

In terms of domain architecture, Fe2OG dioxygenase spans 78-176 (LIHSILISCY…RYAAVSWVQS (99 aa)). 3 residues coordinate Fe cation: histidine 96, aspartate 98, and histidine 157. Arginine 167 contacts 2-oxoglutarate.

Fe(2+) serves as cofactor. L-ascorbate is required as a cofactor.

The polypeptide is PKHD-type hydroxylase CYB_2270 (Synechococcus sp. (strain JA-2-3B'a(2-13)) (Cyanobacteria bacterium Yellowstone B-Prime)).